The primary structure comprises 78 residues: Protein SlyX homolog (78 aa).

The protein belongs to the SlyX family.

This Photobacterium profundum (strain SS9) protein is Protein SlyX homolog.